The primary structure comprises 595 residues: Aspartate--tRNA(Asp/Asn) ligase (595 aa).

E175 contributes to the L-aspartate binding site. Residues 199-202 (QQYK) are aspartate. L-aspartate contacts are provided by R221 and H454. Residue 221–223 (RDE) participates in ATP binding. E488 is a binding site for ATP. R495 is an L-aspartate binding site. ATP is bound at residue 540-543 (GIDR).

Belongs to the class-II aminoacyl-tRNA synthetase family. Type 1 subfamily. In terms of assembly, homodimer.

It is found in the cytoplasm. It carries out the reaction tRNA(Asx) + L-aspartate + ATP = L-aspartyl-tRNA(Asx) + AMP + diphosphate. Its function is as follows. Aspartyl-tRNA synthetase with relaxed tRNA specificity since it is able to aspartylate not only its cognate tRNA(Asp) but also tRNA(Asn). Reaction proceeds in two steps: L-aspartate is first activated by ATP to form Asp-AMP and then transferred to the acceptor end of tRNA(Asp/Asn). This chain is Aspartate--tRNA(Asp/Asn) ligase, found in Rhizobium meliloti (strain 1021) (Ensifer meliloti).